Here is a 332-residue protein sequence, read N- to C-terminus: Holliday junction branch migration complex subunit RuvB (332 aa).

Positions 1–181 are large ATPase domain (RuvB-L); sequence MARILDNDVM…FGITGHMEYY (181 aa). Residues leucine 20, arginine 21, glycine 62, lysine 65, threonine 66, threonine 67, 128–130, arginine 171, tyrosine 181, and arginine 218 each bind ATP; that span reads EDF. A Mg(2+)-binding site is contributed by threonine 66. A small ATPAse domain (RuvB-S) region spans residues 182-252; sequence QEKDLTEIVE…ITDRALTMLD (71 aa). Residues 255–332 form a head domain (RuvB-H) region; the sequence is REGLDYIDQK…RHLGYPYQNT (78 aa). Positions 291, 310, 312, and 315 each coordinate DNA.

This sequence belongs to the RuvB family. As to quaternary structure, homohexamer. Forms an RuvA(8)-RuvB(12)-Holliday junction (HJ) complex. HJ DNA is sandwiched between 2 RuvA tetramers; dsDNA enters through RuvA and exits via RuvB. An RuvB hexamer assembles on each DNA strand where it exits the tetramer. Each RuvB hexamer is contacted by two RuvA subunits (via domain III) on 2 adjacent RuvB subunits; this complex drives branch migration. In the full resolvosome a probable DNA-RuvA(4)-RuvB(12)-RuvC(2) complex forms which resolves the HJ.

Its subcellular location is the cytoplasm. The enzyme catalyses ATP + H2O = ADP + phosphate + H(+). In terms of biological role, the RuvA-RuvB-RuvC complex processes Holliday junction (HJ) DNA during genetic recombination and DNA repair, while the RuvA-RuvB complex plays an important role in the rescue of blocked DNA replication forks via replication fork reversal (RFR). RuvA specifically binds to HJ cruciform DNA, conferring on it an open structure. The RuvB hexamer acts as an ATP-dependent pump, pulling dsDNA into and through the RuvAB complex. RuvB forms 2 homohexamers on either side of HJ DNA bound by 1 or 2 RuvA tetramers; 4 subunits per hexamer contact DNA at a time. Coordinated motions by a converter formed by DNA-disengaged RuvB subunits stimulates ATP hydrolysis and nucleotide exchange. Immobilization of the converter enables RuvB to convert the ATP-contained energy into a lever motion, pulling 2 nucleotides of DNA out of the RuvA tetramer per ATP hydrolyzed, thus driving DNA branch migration. The RuvB motors rotate together with the DNA substrate, which together with the progressing nucleotide cycle form the mechanistic basis for DNA recombination by continuous HJ branch migration. Branch migration allows RuvC to scan DNA until it finds its consensus sequence, where it cleaves and resolves cruciform DNA. The sequence is that of Holliday junction branch migration complex subunit RuvB from Streptococcus pyogenes serotype M3 (strain ATCC BAA-595 / MGAS315).